The following is a 169-amino-acid chain: Lipoprotein signal peptidase (169 aa).

2 consecutive transmembrane segments (helical) span residues 56-76 (FLPP…VIIY) and 84-104 (QPLF…NLID). Residues Asp113 and Asp139 contribute to the active site. A helical membrane pass occupies residues 132–152 (WPIFNIADSAITIGACMLIIF).

Belongs to the peptidase A8 family.

Its subcellular location is the cell inner membrane. The catalysed reaction is Release of signal peptides from bacterial membrane prolipoproteins. Hydrolyzes -Xaa-Yaa-Zaa-|-(S,diacylglyceryl)Cys-, in which Xaa is hydrophobic (preferably Leu), and Yaa (Ala or Ser) and Zaa (Gly or Ala) have small, neutral side chains.. Its pathway is protein modification; lipoprotein biosynthesis (signal peptide cleavage). Functionally, this protein specifically catalyzes the removal of signal peptides from prolipoproteins. The protein is Lipoprotein signal peptidase of Chlorobium phaeovibrioides (strain DSM 265 / 1930) (Prosthecochloris vibrioformis (strain DSM 265)).